Reading from the N-terminus, the 445-residue chain is ATPase PAAT (445 aa).

4 positions are modified to phosphoserine: Ser177, Ser182, Ser254, and Ser302. The disordered stretch occupies residues 426 to 445; the sequence is PTGIPLRHYDSGERLSNGER. Over residues 432–445 the composition is skewed to basic and acidic residues; it reads RHYDSGERLSNGER.

Homodimer. Interacts with ABCB7, ABCB8/MITOSUR and ABCB10.

It is found in the cytoplasm. The protein localises to the mitochondrion. It carries out the reaction ATP + H2O = ADP + phosphate + H(+). ATPase that regulates mitochondrial ABC transporters ABCB7, ABCB8/MITOSUR and ABCB10. Regulates mitochondrial ferric concentration and heme biosynthesis and plays a role in the maintenance of mitochondrial homeostasis and cell survival. This Homo sapiens (Human) protein is ATPase PAAT.